We begin with the raw amino-acid sequence, 180 residues long: tRNA (cytidine(56)-2'-O)-methyltransferase (180 aa).

Residues Leu82, Gly112–Val116, and Val130–Glu137 each bind S-adenosyl-L-methionine.

It belongs to the aTrm56 family. As to quaternary structure, homodimer.

The protein localises to the cytoplasm. It catalyses the reaction cytidine(56) in tRNA + S-adenosyl-L-methionine = 2'-O-methylcytidine(56) in tRNA + S-adenosyl-L-homocysteine + H(+). In terms of biological role, specifically catalyzes the AdoMet-dependent 2'-O-ribose methylation of cytidine at position 56 in tRNAs. This chain is tRNA (cytidine(56)-2'-O)-methyltransferase, found in Methanococcus vannielii (strain ATCC 35089 / DSM 1224 / JCM 13029 / OCM 148 / SB).